Reading from the N-terminus, the 170-residue chain is Small ribosomal subunit protein bS16 (170 aa).

A disordered region spans residues 114-170 (EGGPTTEAAKPKKKAATSGAKKAAKAAEPEAAAPEAAEPEAAAPAEGGEQAESSTES). Positions 142–170 (PEAAAPEAAEPEAAAPAEGGEQAESSTES) are enriched in low complexity.

The protein belongs to the bacterial ribosomal protein bS16 family.

The protein is Small ribosomal subunit protein bS16 of Mycobacterium avium (strain 104).